Consider the following 360-residue polypeptide: MKRAYNFNAGPSALPLPVLERAQKELLNFQNTGMSVMELSHRSKEYEAVHHAAKERLKRLLNVPDGYDILFLQGGASLQFSMVPMNLLTEGKIGCYVLTGAWSEKALKEAQKIGLTTVVASSKEANYTYIPPLDDVQWPKNAAYVHITSNNTIFGTQWKEFPNTPVDLVADMSSDILSRPFDVSQFALIYAGAQKNLGPSGVTVVILRNDLLERIPDGLPTMLDYRTHQKSNSLYNTPPTFAIYMLSLVLEWVEEQGGVAAMEERNQQKAAVLYEAIDESGGFYKPHAEKGSRSLMNVTFTLPNEELTKTFLAEAKERGFVGLGGHRSVGGCRASIYNAVPLEACEALASFMNEFRRRFA.

Arginine 42 serves as a coordination point for L-glutamate. Pyridoxal 5'-phosphate is bound by residues 76–77 (AS), tryptophan 102, threonine 152, aspartate 171, and glutamine 194. At lysine 195 the chain carries N6-(pyridoxal phosphate)lysine. Pyridoxal 5'-phosphate is bound at residue 236–237 (NT).

The protein belongs to the class-V pyridoxal-phosphate-dependent aminotransferase family. SerC subfamily. Homodimer. The cofactor is pyridoxal 5'-phosphate.

The protein localises to the cytoplasm. It catalyses the reaction O-phospho-L-serine + 2-oxoglutarate = 3-phosphooxypyruvate + L-glutamate. The catalysed reaction is 4-(phosphooxy)-L-threonine + 2-oxoglutarate = (R)-3-hydroxy-2-oxo-4-phosphooxybutanoate + L-glutamate. Its pathway is amino-acid biosynthesis; L-serine biosynthesis; L-serine from 3-phospho-D-glycerate: step 2/3. Functionally, catalyzes the reversible conversion of 3-phosphohydroxypyruvate to phosphoserine and of 3-hydroxy-2-oxo-4-phosphonooxybutanoate to phosphohydroxythreonine. The protein is Phosphoserine aminotransferase of Geobacillus kaustophilus (strain HTA426).